A 159-amino-acid chain; its full sequence is NADH-quinone oxidoreductase subunit B (159 aa).

Residues Cys-37, Cys-38, Cys-102, and Cys-132 each coordinate [4Fe-4S] cluster.

Belongs to the complex I 20 kDa subunit family. In terms of assembly, NDH-1 is composed of 14 different subunits. Subunits NuoB, C, D, E, F, and G constitute the peripheral sector of the complex. Requires [4Fe-4S] cluster as cofactor.

It is found in the cell inner membrane. It carries out the reaction a quinone + NADH + 5 H(+)(in) = a quinol + NAD(+) + 4 H(+)(out). Functionally, NDH-1 shuttles electrons from NADH, via FMN and iron-sulfur (Fe-S) centers, to quinones in the respiratory chain. Couples the redox reaction to proton translocation (for every two electrons transferred, four hydrogen ions are translocated across the cytoplasmic membrane), and thus conserves the redox energy in a proton gradient. The chain is NADH-quinone oxidoreductase subunit B from Vesicomyosocius okutanii subsp. Calyptogena okutanii (strain HA).